The following is a 534-amino-acid chain: Paired box protein Pax-1 (534 aa).

The segment at residues 98-224 (TYGEVNQLGG…SSISRILRNK (127 aa)) is a DNA-binding region (paired). The PAI subdomain stretch occupies residues 101–157 (EVNQLGGVFVNGRPLPNAIRLRIVELAQLGIRPCDISRQLRVSHGCVSKILARYNET). The tract at residues 176–224 (NVVKHIRDYKQGDPGIFAWEIRDRLLADGVCDKYNVPSVSSISRILRNK) is RED subdomain. Disordered stretches follow at residues 424–480 (PSRE…AAAP) and 492–511 (EEEA…QAQP).

Its subcellular location is the nucleus. Its function is as follows. This protein is a transcriptional activator. It may play a role in the formation of segmented structures of the embryo. May play an important role in the normal development of the vertebral column. In Homo sapiens (Human), this protein is Paired box protein Pax-1 (PAX1).